We begin with the raw amino-acid sequence, 323 residues long: V-type ATP synthase subunit C (323 aa).

The protein belongs to the V-ATPase V0D/AC39 subunit family.

Functionally, produces ATP from ADP in the presence of a proton gradient across the membrane. This is V-type ATP synthase subunit C from Thermus thermophilus (strain ATCC BAA-163 / DSM 7039 / HB27).